The following is a 69-amino-acid chain: DNA gyrase inhibitor YacG (69 aa).

Positions 14, 17, 33, and 37 each coordinate Zn(2+).

Belongs to the DNA gyrase inhibitor YacG family. As to quaternary structure, interacts with GyrB. Zn(2+) serves as cofactor.

Its function is as follows. Inhibits all the catalytic activities of DNA gyrase by preventing its interaction with DNA. Acts by binding directly to the C-terminal domain of GyrB, which probably disrupts DNA binding by the gyrase. The sequence is that of DNA gyrase inhibitor YacG from Aliivibrio salmonicida (strain LFI1238) (Vibrio salmonicida (strain LFI1238)).